Reading from the N-terminus, the 306-residue chain is Homoserine kinase (306 aa).

An ATP-binding site is contributed by 90 to 100 (PLARGLGSSAS).

The protein belongs to the GHMP kinase family. Homoserine kinase subfamily.

The protein localises to the cytoplasm. The enzyme catalyses L-homoserine + ATP = O-phospho-L-homoserine + ADP + H(+). It functions in the pathway amino-acid biosynthesis; L-threonine biosynthesis; L-threonine from L-aspartate: step 4/5. Its function is as follows. Catalyzes the ATP-dependent phosphorylation of L-homoserine to L-homoserine phosphate. In Staphylococcus epidermidis (strain ATCC 12228 / FDA PCI 1200), this protein is Homoserine kinase.